The following is a 95-amino-acid chain: Integration host factor subunit beta (95 aa).

The protein belongs to the bacterial histone-like protein family. Heterodimer of an alpha and a beta chain.

Its function is as follows. This protein is one of the two subunits of integration host factor, a specific DNA-binding protein that functions in genetic recombination as well as in transcriptional and translational control. This Colwellia psychrerythraea (strain 34H / ATCC BAA-681) (Vibrio psychroerythus) protein is Integration host factor subunit beta.